Consider the following 332-residue polypeptide: Serpentine receptor class alpha-10 (332 aa).

Residues M1–N26 are Extracellular-facing. Residues V27–I47 traverse the membrane as a helical segment. Topologically, residues L48–T64 are cytoplasmic. A helical membrane pass occupies residues S65 to I85. The Extracellular portion of the chain corresponds to R86 to H109. A helical transmembrane segment spans residues V110–A132. Over T133–P146 the chain is Cytoplasmic. A helical transmembrane segment spans residues G147–I167. Topologically, residues G168–V191 are extracellular. A helical transmembrane segment spans residues F192–F212. The Cytoplasmic portion of the chain corresponds to A213–R239. Residues I240 to L260 traverse the membrane as a helical segment. Residues T261 to N276 lie on the Extracellular side of the membrane. The helical transmembrane segment at I277–H297 threads the bilayer. The Cytoplasmic segment spans residues R298–G332.

The protein belongs to the nematode receptor-like protein sra family.

The protein resides in the membrane. This chain is Serpentine receptor class alpha-10, found in Caenorhabditis briggsae.